A 110-amino-acid polypeptide reads, in one-letter code: Protein OPG154 (110 aa).

This sequence belongs to the orthopoxvirus OPG154 protein family. As to quaternary structure, homohexamers, covalently linked. Interacts with OPG144 and OPG153.

The protein resides in the virion. Structural protein involved in the envelopment of mature virion (MV) to form the wrapped virion (WV). The wrapping consists of the addition of Golgi membranes to the mature virion. Participates in mature virion (MV) movement within the infected cell. May play an indirect role in MV-cell fusion. In Homo sapiens (Human), this protein is Protein OPG154 (OPG154).